The sequence spans 834 residues: Protein ROOT HAIR DEFECTIVE 3 homolog 2 (834 aa).

The Cytoplasmic segment spans residues 1–683 (MGENDDGCST…EAHKRNNNWL (683 aa)). The GB1/RHD3-type G domain occupies 37-252 (GLSYAVVAIM…ISPGGLAGDR (216 aa)). 47–54 (GPQSSGKS) serves as a coordination point for GTP. A coiled-coil region spans residues 214-241 (MIVALSSYEEKEKQFEQEVAELRQRFFH). Residues 684 to 704 (PPAWAIVLMIVLGFNEFMMLL) traverse the membrane as a helical segment. At 705 to 707 (KNP) the chain is on the lumenal side. A helical transmembrane segment spans residues 708 to 728 (LYLLGFFVAFLLSKALWVQLD). Over 729–834 (IPREFQHGAV…NVQESEISQM (106 aa)) the chain is Cytoplasmic. A compositionally biased stretch (polar residues) spans 767-783 (TTQEVPDLSASQTYRQQ). The tract at residues 767–834 (TTQEVPDLSA…NVQESEISQM (68 aa)) is disordered. Low complexity predominate over residues 784–803 (SPSHSISSTISESVASNISS). The span at 823 to 834 (TNNVQESEISQM) shows a compositional bias: polar residues.

This sequence belongs to the TRAFAC class dynamin-like GTPase superfamily. GB1/RHD3 GTPase family. RHD3 subfamily. As to expression, expressed in roots, leaves, stems and flowers.

The protein resides in the endoplasmic reticulum membrane. Probable GTP-binding protein that may be involved in cell development. In Arabidopsis thaliana (Mouse-ear cress), this protein is Protein ROOT HAIR DEFECTIVE 3 homolog 2.